Consider the following 500-residue polypeptide: L-arabinose isomerase (500 aa).

Residues Glu-306, Glu-333, His-350, and His-450 each coordinate Mn(2+).

This sequence belongs to the arabinose isomerase family. As to quaternary structure, homohexamer. Mn(2+) serves as cofactor.

It carries out the reaction beta-L-arabinopyranose = L-ribulose. The protein operates within carbohydrate degradation; L-arabinose degradation via L-ribulose; D-xylulose 5-phosphate from L-arabinose (bacterial route): step 1/3. Catalyzes the conversion of L-arabinose to L-ribulose. This is L-arabinose isomerase from Salmonella newport (strain SL254).